A 378-amino-acid polypeptide reads, in one-letter code: Dual-specificity RNA methyltransferase RlmN (378 aa).

Residue glutamate 95 is the Proton acceptor of the active site. Residues 101–345 enclose the Radical SAM core domain; it reads EETRGTLCVS…TTIRKTRGDD (245 aa). The cysteines at positions 108 and 350 are disulfide-linked. Positions 115, 119, and 122 each coordinate [4Fe-4S] cluster. S-adenosyl-L-methionine is bound by residues 176–177, serine 208, 230–232, and asparagine 307; these read GE and SLH. Catalysis depends on cysteine 350, which acts as the S-methylcysteine intermediate.

The protein belongs to the radical SAM superfamily. RlmN family. [4Fe-4S] cluster is required as a cofactor.

The protein resides in the cytoplasm. The enzyme catalyses adenosine(2503) in 23S rRNA + 2 reduced [2Fe-2S]-[ferredoxin] + 2 S-adenosyl-L-methionine = 2-methyladenosine(2503) in 23S rRNA + 5'-deoxyadenosine + L-methionine + 2 oxidized [2Fe-2S]-[ferredoxin] + S-adenosyl-L-homocysteine. The catalysed reaction is adenosine(37) in tRNA + 2 reduced [2Fe-2S]-[ferredoxin] + 2 S-adenosyl-L-methionine = 2-methyladenosine(37) in tRNA + 5'-deoxyadenosine + L-methionine + 2 oxidized [2Fe-2S]-[ferredoxin] + S-adenosyl-L-homocysteine. Specifically methylates position 2 of adenine 2503 in 23S rRNA and position 2 of adenine 37 in tRNAs. m2A2503 modification seems to play a crucial role in the proofreading step occurring at the peptidyl transferase center and thus would serve to optimize ribosomal fidelity. In Burkholderia pseudomallei (strain K96243), this protein is Dual-specificity RNA methyltransferase RlmN.